A 689-amino-acid chain; its full sequence is Glycine--tRNA ligase beta subunit (689 aa).

The protein belongs to the class-II aminoacyl-tRNA synthetase family. Tetramer of two alpha and two beta subunits.

The protein resides in the cytoplasm. The enzyme catalyses tRNA(Gly) + glycine + ATP = glycyl-tRNA(Gly) + AMP + diphosphate. The sequence is that of Glycine--tRNA ligase beta subunit (glyS) from Pasteurella multocida (strain Pm70).